A 706-amino-acid polypeptide reads, in one-letter code: Termination factor NPH-I homolog (706 aa).

The Helicase ATP-binding domain maps to 62–227; it reads IGQGENTRGL…VPCFNMLSGR (166 aa). 75-82 serves as a coordination point for ATP; the sequence is HQMGMGKT. A DEAH box motif is present at residues 168-171; sequence DEAH. Positions 417–599 constitute a Helicase C-terminal domain; it reads QCLQPLKVLE…HLNSAFRDLL (183 aa).

Belongs to the DEAD box helicase family. DEAH subfamily. Part of the viral DNA-directed RNA polymerase that consists of 8 polII-like subunits (RPB1, RPB2, RPB3, RPB5, RPB6, RPB7, RPB9, RPB10), a capping enzyme and a termination factor.

It is found in the virion. Functionally, putative DNA-dependent ATPase required for providing the needed energy to achieve the termination of early transcripts. The sequence is that of Termination factor NPH-I homolog from African swine fever virus (isolate Tick/South Africa/Pretoriuskop Pr4/1996) (ASFV).